The chain runs to 127 residues: MAYRKLGRDSAHRKAMLREMTTQLIMNERIVTTETRAKEVRKTAEKMITLGKRGNLASRRKAAAFVRNEVADVHEEKDAVVVKSALQKLFSDVAPRYKDRNGGYTRILKLAVPRKGDAAPMVILELV.

This sequence belongs to the bacterial ribosomal protein bL17 family. Part of the 50S ribosomal subunit. Contacts protein L32.

The polypeptide is Large ribosomal subunit protein bL17 (Lactobacillus helveticus (strain DPC 4571)).